Reading from the N-terminus, the 579-residue chain is Potassium-transporting ATPase potassium-binding subunit (579 aa).

10 helical membrane passes run 2 to 22, 66 to 86, 135 to 155, 177 to 197, 262 to 282, 292 to 312, 391 to 411, 437 to 457, 490 to 510, and 546 to 566; these read MNLV…AIPL, SFSV…IHIF, GLTV…FALI, VLYI…SQGV, LSNL…CFTF, GIAI…IIGV, VFGG…LAVF, VLVC…ASIL, FAGF…SMLF, and FIGL…FPAL.

The protein belongs to the KdpA family. The system is composed of three essential subunits: KdpA, KdpB and KdpC.

The protein resides in the cell membrane. Its function is as follows. Part of the high-affinity ATP-driven potassium transport (or Kdp) system, which catalyzes the hydrolysis of ATP coupled with the electrogenic transport of potassium into the cytoplasm. This subunit binds the extracellular potassium ions and delivers the ions to the membrane domain of KdpB through an intramembrane tunnel. This Clostridium botulinum (strain Alaska E43 / Type E3) protein is Potassium-transporting ATPase potassium-binding subunit.